We begin with the raw amino-acid sequence, 372 residues long: 4-hydroxy-3-methylbut-2-en-1-yl diphosphate synthase (flavodoxin) (372 aa).

Positions 270, 273, 305, and 312 each coordinate [4Fe-4S] cluster.

It belongs to the IspG family. The cofactor is [4Fe-4S] cluster.

It carries out the reaction (2E)-4-hydroxy-3-methylbut-2-enyl diphosphate + oxidized [flavodoxin] + H2O + 2 H(+) = 2-C-methyl-D-erythritol 2,4-cyclic diphosphate + reduced [flavodoxin]. The protein operates within isoprenoid biosynthesis; isopentenyl diphosphate biosynthesis via DXP pathway; isopentenyl diphosphate from 1-deoxy-D-xylulose 5-phosphate: step 5/6. Converts 2C-methyl-D-erythritol 2,4-cyclodiphosphate (ME-2,4cPP) into 1-hydroxy-2-methyl-2-(E)-butenyl 4-diphosphate. The protein is 4-hydroxy-3-methylbut-2-en-1-yl diphosphate synthase (flavodoxin) of Alcanivorax borkumensis (strain ATCC 700651 / DSM 11573 / NCIMB 13689 / SK2).